Reading from the N-terminus, the 538-residue chain is NAD(P)H-quinone oxidoreductase chain 4 (538 aa).

Transmembrane regions (helical) follow at residues 11 to 31 (FPWL…VPFI), 43 to 63 (YALI…FKGF), 95 to 115 (MPLI…AWPV), 119 to 139 (PKLF…VFAV), 143 to 163 (LLFF…LAIW), 175 to 195 (FIIY…AMGF), 217 to 237 (GFQL…LPIV), 251 to 271 (TAPV…YALL), 285 to 305 (FAPL…LTSF), 314 to 334 (IAYS…SFSS), 340 to 360 (AMLQ…LVGA), 382 to 404 (IMFA…SGFI), 425 to 445 (IVVA…LLSM), and 472 to 492 (IYII…PKIM).

Belongs to the complex I subunit 4 family.

Its subcellular location is the cellular thylakoid membrane. It carries out the reaction a plastoquinone + NADH + (n+1) H(+)(in) = a plastoquinol + NAD(+) + n H(+)(out). It catalyses the reaction a plastoquinone + NADPH + (n+1) H(+)(in) = a plastoquinol + NADP(+) + n H(+)(out). Its function is as follows. NDH-1 shuttles electrons from NAD(P)H, via FMN and iron-sulfur (Fe-S) centers, to quinones in the respiratory chain. The immediate electron acceptor for the enzyme in this species is believed to be plastoquinone. Couples the redox reaction to proton translocation (for every two electrons transferred, four hydrogen ions are translocated across the cytoplasmic membrane), and thus conserves the redox energy in a proton gradient. The chain is NAD(P)H-quinone oxidoreductase chain 4 from Prochlorococcus marinus (strain NATL2A).